A 542-amino-acid chain; its full sequence is Coiled-coil domain-containing protein 60 (542 aa).

Residues 70–97 (TMLQEETAFKKHQQHLKKLQEEELNKFQ) adopt a coiled-coil conformation. Disordered stretches follow at residues 228 to 284 (ATRK…EEEV) and 334 to 358 (QTTH…TQKK). 2 stretches are compositionally biased toward low complexity: residues 245–261 (SGGS…NPSS) and 342–351 (RSSTTSGESH).

This Rattus norvegicus (Rat) protein is Coiled-coil domain-containing protein 60 (Ccdc60).